The primary structure comprises 272 residues: ATP phosphoribosyltransferase regulatory subunit (272 aa).

It belongs to the class-II aminoacyl-tRNA synthetase family. HisZ subfamily. As to quaternary structure, heteromultimer composed of HisG and HisZ subunits.

Its subcellular location is the cytoplasm. The protein operates within amino-acid biosynthesis; L-histidine biosynthesis; L-histidine from 5-phospho-alpha-D-ribose 1-diphosphate: step 1/9. Its function is as follows. Required for the first step of histidine biosynthesis. May allow the feedback regulation of ATP phosphoribosyltransferase activity by histidine. This is ATP phosphoribosyltransferase regulatory subunit from Staphylococcus aureus (strain bovine RF122 / ET3-1).